We begin with the raw amino-acid sequence, 400 residues long: Carnosine N-methyltransferase (400 aa).

Positions Met-1–Arg-51 are disordered. The segment covering Ser-28–Gly-44 has biased composition (low complexity). Residues Gln-155, Arg-158, Gly-199, Glu-220, Asp-286, Phe-287, and Cys-303 each coordinate S-adenosyl-L-methionine. Residue Asp-307 coordinates carnosine. Tyr-315 contacts S-adenosyl-L-methionine. Carnosine is bound by residues His-338 and Tyr-389.

Belongs to the carnosine N-methyltransferase family. Homodimer. Each monomer accommodates one molecule of carnosine in its active pocket, precisely anchoring the histidine imidazole ring such that only N1 is exposed and deprotonated for methylation.

The protein localises to the cytoplasm. It localises to the cytosol. The protein resides in the nucleus. It catalyses the reaction carnosine + S-adenosyl-L-methionine = anserine + S-adenosyl-L-homocysteine + H(+). In terms of biological role, N-methyltransferase that catalyzes the formation of anserine (beta-alanyl-N(Pi)-methyl-L-histidine) from carnosine. Anserine, a methylated derivative of carnosine (beta-alanyl-L-histidine), is an abundant constituent of vertebrate skeletal muscles. Also methylates other L-histidine-containing di- and tripeptides such as Gly-Gly-His, Gly-His and homocarnosine (GABA-His). This Mus musculus (Mouse) protein is Carnosine N-methyltransferase.